Here is a 219-residue protein sequence, read N- to C-terminus: Cyclin-U4-3 (219 aa).

It belongs to the cyclin family. Cyclin U/P subfamily. In terms of assembly, interacts with CDKA-1. In terms of tissue distribution, expressed at low levels in roots, stems and flowers. Expressed in the shoot apex, leaf primordia and young leaves.

The protein is Cyclin-U4-3 (CYCU4-3) of Arabidopsis thaliana (Mouse-ear cress).